We begin with the raw amino-acid sequence, 88 residues long: Conotoxin Ca8.3 (88 aa).

The first 21 residues, 1-21 (MMLKMGAMFVLLLLFILPSSQ), serve as a signal peptide directing secretion. Positions 22–46 (QEGDVQARKTHLKSGFYGTLAMSTR) are excised as a propeptide.

Belongs to the conotoxin S superfamily. In terms of processing, contains 5 disulfide bonds. In terms of tissue distribution, expressed by the venom duct.

The protein resides in the secreted. The polypeptide is Conotoxin Ca8.3 (Conus caracteristicus (Characteristic cone)).